The sequence spans 106 residues: MNDSEFHRLADQLWLTIEERLDDRDGDSDIDCEINGGVLTITFENGSKIIINRQEPLHQVWLATKQGGSHFDLKGDEWICDRSGETFWDLLEQAATQQAGETVSFR.

Belongs to the frataxin family.

Involved in iron-sulfur (Fe-S) cluster assembly. May act as a regulator of Fe-S biogenesis. The polypeptide is Iron-sulfur cluster assembly protein CyaY (Shigella flexneri serotype 5b (strain 8401)).